A 387-amino-acid polypeptide reads, in one-letter code: TSC22 domain family protein 4 (387 aa).

Disordered stretches follow at residues 1-85 and 135-232; these read MSGG…GEPY and ISTP…RRDG. Residues 31 to 51 show a composition bias toward pro residues; that stretch reads PVPPALAGPPPRLPNGDPNPD. Threonine 57 is modified (phosphothreonine). Residues serine 62 and serine 165 each carry the phosphoserine modification. Residue threonine 183 is modified to Phosphothreonine. 3 positions are modified to phosphoserine: serine 187, serine 189, and serine 219. A Phosphothreonine modification is found at threonine 223. Serine 254, serine 258, and serine 271 each carry phosphoserine. The leucine-zipper stretch occupies residues 336–357; the sequence is LKEQIRDLAERNAALEQENGLL. Serine 362 is modified (phosphoserine). The tract at residues 368–387 is disordered; that stretch reads QLPSSGLPRLGPSAPNGPSI.

Belongs to the TSC-22/Dip/Bun family. As to quaternary structure, forms a homodimer or heterodimer. Forms a heterodimer with TSC22D1 isoforms 1 and 2. Interacts with NRBP1. In terms of tissue distribution, expressed in the liver (at protein level). Expressed in Purkinje cells and proliferating cerebellar granular neurons (at protein level). Expressed in the cortex, medulla and papilla of the kidney.

It localises to the nucleus. The protein localises to the cytoplasm. The protein resides in the cell projection. It is found in the dendrite. Its subcellular location is the synapse. Binds DNA and acts as a transcriptional repressor. Involved in the regulation of systematic glucose homeostasis and insulin sensitivity, via transcriptional repression of downstream insulin signaling targets such as OBP2A/LCN13. Acts as a negative regulator of lipogenic gene expression in hepatocytes and thereby mediates the control of very low-density lipoprotein release. May play a role in neurite elongation and survival. This is TSC22 domain family protein 4 from Mus musculus (Mouse).